The chain runs to 218 residues: Ribose-5-phosphate isomerase A (218 aa).

Substrate-binding positions include lysine 7, 28–31 (TGST), 81–84 (DGAD), and 94–97 (KGGG). Catalysis depends on glutamate 103, which acts as the Proton acceptor. Lysine 121 contributes to the substrate binding site.

This sequence belongs to the ribose 5-phosphate isomerase family. As to quaternary structure, homodimer.

The catalysed reaction is aldehydo-D-ribose 5-phosphate = D-ribulose 5-phosphate. It functions in the pathway carbohydrate degradation; pentose phosphate pathway; D-ribose 5-phosphate from D-ribulose 5-phosphate (non-oxidative stage): step 1/1. In terms of biological role, catalyzes the reversible conversion of ribose-5-phosphate to ribulose 5-phosphate. This chain is Ribose-5-phosphate isomerase A, found in Vibrio vulnificus (strain YJ016).